Consider the following 397-residue polypeptide: Na(+)/H(+) antiporter NhaA 2 (397 aa).

The next 11 helical transmembrane spans lie at 9 to 29, 59 to 79, 95 to 115, 125 to 145, 154 to 174, 177 to 197, 222 to 242, 260 to 280, 292 to 312, 332 to 352, and 371 to 391; these read LHNP…AMAV, LLLW…GLEL, ILPV…YTLI, GWAI…ALLG, LFLL…IAFF, SELS…LILM, SGVH…LKGE, VVGL…SLQG, LGIA…FVWL, GVAL…SLAF, and LGIL…LRFS.

It belongs to the NhaA Na(+)/H(+) (TC 2.A.33) antiporter family.

Its subcellular location is the cell inner membrane. It catalyses the reaction Na(+)(in) + 2 H(+)(out) = Na(+)(out) + 2 H(+)(in). Na(+)/H(+) antiporter that extrudes sodium in exchange for external protons. This chain is Na(+)/H(+) antiporter NhaA 2, found in Magnetococcus marinus (strain ATCC BAA-1437 / JCM 17883 / MC-1).